A 145-amino-acid chain; its full sequence is Superoxide dismutase [Mn/Fe] (145 aa).

Fe(3+) is bound by residues His10 and His64. Mn(2+)-binding residues include His10 and His64.

This sequence belongs to the iron/manganese superoxide dismutase family. The cofactor is Mn(2+). It depends on Fe(3+) as a cofactor.

The catalysed reaction is 2 superoxide + 2 H(+) = H2O2 + O2. Destroys superoxide anion radicals which are normally produced within the cells and which are toxic to biological systems. Catalyzes the dismutation of superoxide anion radicals into O2 and H2O2 by successive reduction and oxidation of the transition metal ion at the active site. This chain is Superoxide dismutase [Mn/Fe] (sodA), found in Streptococcus parasanguinis.